Here is an 893-residue protein sequence, read N- to C-terminus: UPF0182 protein CLK_3152 (893 aa).

The next 7 helical transmembrane spans lie at 9 to 29 (IPLF…NFII), 49 to 69 (AIII…WMYY), 94 to 114 (LFFI…SSSY), 154 to 174 (VIIS…FILE), 202 to 222 (LAIV…IKIW), 246 to 266 (FYKI…LSIV), and 273 to 293 (VSIC…ASFL).

It belongs to the UPF0182 family.

Its subcellular location is the cell membrane. This Clostridium botulinum (strain Loch Maree / Type A3) protein is UPF0182 protein CLK_3152.